The primary structure comprises 394 residues: UPF0284 protein SYNW1869 (394 aa).

This sequence belongs to the UPF0284 family.

The protein is UPF0284 protein SYNW1869 of Parasynechococcus marenigrum (strain WH8102).